Reading from the N-terminus, the 529-residue chain is Autophagy-related protein 21 (529 aa).

A compositionally biased stretch (polar residues) spans 49-62; it reads NSLEDSAGCQNPTH. Residues 49–70 form a disordered region; it reads NSLEDSAGCQNPTHSKTDSQDT. 2 WD repeats span residues 271-311 and 321-361; these read AHHS…GKVK and GHNL…SDIC. The short motif at 318-322 is the L/FRRG motif element; that stretch reads LRRGH. A disordered region spans residues 362-388; the sequence is TNENSEDRTNHNSDYEDSDGDTSKSSE. Positions 366-375 are enriched in basic and acidic residues; it reads SEDRTNHNSD.

Belongs to the WD repeat PROPPIN family.

The protein resides in the cytoplasm. Its subcellular location is the membrane. It localises to the vacuole membrane. In terms of biological role, required for cytoplasm to vacuole transport (Cvt) vesicles formation and mitophagy. Involved in binding of phosphatidylethanolamine to ATG8 and in recruitment of ATG8 and ATG5 to the pre-autophagosomal structure. Protects ATG8 from ARG4-mediated cleavage. This is Autophagy-related protein 21 (ATG21) from Candida albicans (strain SC5314 / ATCC MYA-2876) (Yeast).